The following is a 996-amino-acid chain: Sodium/potassium-transporting ATPase subunit alpha-A (996 aa).

2 helical membrane passes run L73–T93 and L107–F123. Residues D191–D211 are disordered. A run of 2 helical transmembrane segments spans residues F268–Y290 and A297–A325. D353 functions as the 4-aspartylphosphate intermediate in the catalytic mechanism. K483 is an ATP binding site. 2 residues coordinate Mg(2+): D692 and D696. 4 helical membrane-spanning segments follow: residues L762–I785, E820–G847, Y889–I909, and T926–L951.

This sequence belongs to the cation transport ATPase (P-type) (TC 3.A.3) family. Type IIC subfamily. The sodium/potassium-transporting ATPase is composed of a catalytic alpha subunit, an auxiliary non-catalytic beta subunit and an additional regulatory subunit.

It localises to the cell membrane. The catalysed reaction is K(+)(out) + Na(+)(in) + ATP + H2O = K(+)(in) + Na(+)(out) + ADP + phosphate + H(+). Its function is as follows. This is the catalytic component of the active enzyme, which catalyzes the hydrolysis of ATP coupled with the exchange of sodium and potassium ions across the plasma membrane. This action creates the electrochemical gradient of sodium and potassium ions, providing the energy for active transport of various nutrients. The sequence is that of Sodium/potassium-transporting ATPase subunit alpha-A from Artemia franciscana (Brine shrimp).